The following is a 295-amino-acid chain: Movement protein (295 aa).

Residues 256–295 are disordered; that stretch reads KKTNVKEESPTSDPQSGEVSSMTQSVPGAADTRIPKPRRR. A compositionally biased stretch (polar residues) spans 266–281; sequence TSDPQSGEVSSMTQSV.

The protein belongs to the bromovirus movement protein family.

It is found in the host cell junction. The protein resides in the host plasmodesma. Its function is as follows. Transports viral genome to neighboring plant cells directly through plasmosdesmata, without any budding. The movement protein allows efficient cell to cell propagation, by bypassing the host cell wall barrier. Acts by forming a tubular structure at the host plasmodesmata, enlarging it enough to allow free passage of virion capsids. This chain is Movement protein, found in Broad bean mottle virus.